The primary structure comprises 195 residues: CASP-like protein 2C2 (195 aa).

The Cytoplasmic segment spans residues 1 to 18 (MAATTAAAAVPGVVRAER). Residues 19 to 39 (LLRGGCVVMAATAALLLGFSA) form a helical membrane-spanning segment. At 40–57 (ETKTVLFVRKTAVAKDVQ) the chain is on the extracellular side. A helical transmembrane segment spans residues 58-78 (ALWVLTVAAAAAAGYQFAQLV). The Cytoplasmic segment spans residues 79–106 (RCMYCSSSGDAGAMAVAWTSFLLDKGCA). Residues 107–127 (YVVFASTAAALQACMVGLIGV) traverse the membrane as a helical segment. At 128 to 145 (EALQWSKLCNIYTRFCEQ) the chain is on the extracellular side. Residues 146-166 (AAAGMLCSFLAAAGMAVLSAF) form a helical membrane-spanning segment. At 167–195 (SARRLFRLYSPAGHRRSCPRAAVLATSPH) the chain is on the cytoplasmic side.

It belongs to the Casparian strip membrane proteins (CASP) family. In terms of assembly, homodimer and heterodimers.

The protein localises to the cell membrane. This Oryza sativa subsp. japonica (Rice) protein is CASP-like protein 2C2.